Here is a 1283-residue protein sequence, read N- to C-terminus: MSLMVSAGRGLGAVWSPTHVQVTVLQARGLRAKGPGGTSDAYAVIQVGKEKYATSVSERSLGAPVWREEATFELPSLLSSGPAAAATLQLTVLHRALLGLDKFLGRAEVDLRDLHRDQGRRKTQWYKLKSKPGKKDKERGEIEVDIQFMRNNMTASMFDLSMKDKSRNPFGKLKDKIKGKNKDSGSDTASAIIPSTTPSVDSDDESVVKDKKKKSKIKTLLSKSNLQKTPLSQSMSVLPTSKPEKVLLRPGDFQSQWDEDDNEDESSSASDVMSHKRTASTDLKQLNQVNFTLPKKEGLSFLGGLRSKNDVLSRSNVCINGNHVYLEQPEAKGEIKDSSPSSSPSPKGFRKKHLFSSTENLAAGSWKEPAEGGGLSSDRQLSESSTKDSLKSMTLPSYRPAPLVSGDLRENMAPANSEATKEAKESKKPESRRSSLLSLMTGKKDVAKGSEGENPLTVPGREKEGMLMGVKPGEDASGPAEDLVRRSEKDTAAVVSRQGSSLNLFEDVQITEPEAEPESKSEPRPPISSPRAPQTRAVKPRLEVSPEAQPTARLPSPTDSPSSLPPLPSSSGQASVPSELGHGADTQSSESPSVFSSLSSPIAAPISTSTPIESWPLVDRGQAKSEGPPLLPKAELQTESLTPVPNSGSSALGSLFKQPSFPANKGTEDSLMGRTRETGTEKNTSSLELEESLPEQPETGRQEEELPRFPCKKQDYSPSSGEAQEVPFALSLSSDGAVSPVGELAAGGDRDLESQAGSLVESKARDAAEEVAPPLPMGASVPSIDSMMRKLEEMGLNLRKDQKKTKKRVSFSEQLFTEEAVAGAALLVEGHSSCPQELNPAWSVAGNASDGEPPESPHAEDSERESVTTPGPATCGAPASPADHLLLPSQEESFSEVPMSEASSAKDTPLFRMEGEDALVTQYQSKASDHEGLLSDPLSDLQLVSDFKSPIMADLNLSLPSIPEVASDDERIDQVEDDGDQVEDDGETAKSSTLDIGALSLGLVVPCPERGKGPSGEADRLVLGEGLCDFRLQAPQASVTAPSEQTTEFGIHKPHLGKSSSLDKQLPGPSGGEEEKPMGNGSPSPPPGTSLDNPVPSPSPSEIFPVTHSFPSSAHSDTHHTSTAESQKKATAEGSAGRVENFGKRKPLLQAWVSPSETHPVSAQPGAGTGSAKHRLHPVKPMNAMATKVANCSLGTATIISENLNNEVMMKKYSPSDPAFAYAQLTHDELIQLVLKQKETISKKEFQVRELEDYIDNLLVRVMEETPNILRIPTQVGKKAGKM.

The C2 domain occupies 1 to 126 (MSLMVSAGRG…DQGRRKTQWY (126 aa)). Residues 161 to 185 (SMKDKSRNPFGKLKDKIKGKNKDSG) show a composition bias toward basic and acidic residues. The tract at residues 161–281 (SMKDKSRNPF…VMSHKRTAST (121 aa)) is disordered. A phosphoserine mark is found at serine 184, serine 202, serine 206, and serine 234. A compositionally biased stretch (polar residues) spans 225–239 (NLQKTPLSQSMSVLP). Over residues 257–266 (WDEDDNEDES) the composition is skewed to acidic residues. Serine 300, serine 315, serine 339, serine 341, serine 343, serine 345, serine 356, serine 357, and serine 382 each carry phosphoserine. Disordered regions lie at residues 330-727 (EAKG…QEVP), 741-782 (VGEL…ASVP), 835-913 (PQEL…LFRM), 969-993 (DERI…KSST), and 1037-1141 (ASVT…RVEN). A compositionally biased stretch (basic and acidic residues) spans 419 to 433 (ATKEAKESKKPESRR). Serine 435 carries the phosphoserine modification. Residues 442–451 (GKKDVAKGSE) show a composition bias toward basic and acidic residues. The residue at position 477 (serine 477) is a Phosphoserine. The segment covering 482 to 491 (DLVRRSEKDT) has biased composition (basic and acidic residues). Residues serine 529 and serine 545 each carry the phosphoserine modification. A compositionally biased stretch (low complexity) spans 588 to 612 (SSESPSVFSSLSSPIAAPISTSTPI). The span at 637–652 (QTESLTPVPNSGSSAL) shows a compositional bias: polar residues. Residues 698–715 (ETGRQEEELPRFPCKKQD) show a composition bias toward basic and acidic residues. Residue serine 758 is modified to Phosphoserine. Over residues 855–866 (ESPHAEDSERES) the composition is skewed to basic and acidic residues. Acidic residues predominate over residues 975–986 (VEDDGDQVEDDG). Residues 1037–1048 (ASVTAPSEQTTE) are compositionally biased toward polar residues. Residues 1116–1131 (SDTHHTSTAESQKKAT) are compositionally biased toward basic and acidic residues. The residue at position 1135 (serine 1135) is a Phosphoserine. One can recognise an FIP-RBD domain in the interval 1211–1273 (KKYSPSDPAF…EETPNILRIP (63 aa)). Positions 1219-1283 (AFAYAQLTHD…TQVGKKAGKM (65 aa)) are necessary for interaction with RAB4A and RAB11A, subcellular location and endosomal recycling.

In terms of assembly, interacts with RAB11A (GTP-bound form); the interaction induces RAB11FIP1 recruitment to membranes. Interacts with RAB14 (GTP-bound form). As to quaternary structure, homooligomer. Isoform 2 interacts with RAB4A, RAB11A, RAB11B and RAB25. According to PubMed:15280022, RAB4A binding to RAB11FIP1 is of very low affinity in vitro and in vivo. Isoform 2 is expressed in brain, heart, testis, lung, spleen, ovary and small intestine.

Its subcellular location is the recycling endosome. The protein localises to the cytoplasmic vesicle. It localises to the phagosome membrane. Functionally, a Rab11 effector protein involved in the endosomal recycling process. Also involved in controlling membrane trafficking along the phagocytic pathway and in phagocytosis. Interaction with RAB14 may function in the process of neurite formation. This chain is Rab11 family-interacting protein 1, found in Homo sapiens (Human).